The following is a 770-amino-acid chain: Tripartite terminase subunit 1 (770 aa).

The C3H1-type zinc-finger motif lies at 199 to 227 (CAICFEELCITANQGETLHRRLLGCICDH). An ATP-binding site is contributed by 675–682 (FTSVFHCG).

Belongs to the herpesviridae TRM1 protein family. Associates with TRM2 and TRM3 to form the tripartite terminase complex. Interacts with portal protein.

The protein resides in the host nucleus. Functionally, component of the molecular motor that translocates viral genomic DNA in empty capsid during DNA packaging. Forms a tripartite terminase complex together with TRM2 and TRM3 in the host cytoplasm. Once the complex reaches the host nucleus, it interacts with the capsid portal vertex. This portal forms a ring in which genomic DNA is translocated into the capsid. TRM1 carries an endonuclease activity that plays an important role for the cleavage of concatemeric viral DNA into unit length genomes. The sequence is that of Tripartite terminase subunit 1 from Varicella-zoster virus (strain Dumas) (HHV-3).